The chain runs to 396 residues: MYGTCHLSTHKLKIGIVVGEVSGDTLGVQLMRSFREQGIDAEFEGIGGPQMIAEGFNSFYPMETLSVMGIVEVLKDIKKLFAVRDGLVQRWREHPVDVFVGIDAPDFNLRLSKSLKEKNLPIRTVQYVSPSVWAWRQGRVKGIKATIDLVLCLFPFEKNFYEQHSVRAAFVGHPLAKLLPLNNSLVEAKQALGLNPEKTYIALLPGSRKGEVERLLPMLLGSAEILLKKYPDVEYLIPAISDVRKKQIQDGIQSIAPQYAQKLHVLENQDQESKIGRQVMNASDIVALASGTATLEAMLLHRPMVSFYKLNTLTYIIAKLLVKIQYYSLPNIIAGKKVIEELIQKDANPERLAHEIEKLMNNETAKIQMMQHFSMHKQLISGNTEDPVQAIMTLIQ.

It belongs to the LpxB family.

It carries out the reaction a lipid X + a UDP-2-N,3-O-bis[(3R)-3-hydroxyacyl]-alpha-D-glucosamine = a lipid A disaccharide + UDP + H(+). It participates in bacterial outer membrane biogenesis; LPS lipid A biosynthesis. Condensation of UDP-2,3-diacylglucosamine and 2,3-diacylglucosamine-1-phosphate to form lipid A disaccharide, a precursor of lipid A, a phosphorylated glycolipid that anchors the lipopolysaccharide to the outer membrane of the cell. The polypeptide is Lipid-A-disaccharide synthase (Acinetobacter baylyi (strain ATCC 33305 / BD413 / ADP1)).